The chain runs to 69 residues: DNA-directed RNA polymerase subunit epsilon (69 aa).

It belongs to the RNA polymerase subunit epsilon family. RNAP is composed of a core of 2 alpha, a beta and a beta' subunit. The core is associated with a delta subunit, and at least one of epsilon or omega. When a sigma factor is associated with the core the holoenzyme is formed, which can initiate transcription.

It catalyses the reaction RNA(n) + a ribonucleoside 5'-triphosphate = RNA(n+1) + diphosphate. In terms of biological role, a non-essential component of RNA polymerase (RNAP). The protein is DNA-directed RNA polymerase subunit epsilon of Lysinibacillus sphaericus (strain C3-41).